The following is a 322-amino-acid chain: Replication factor C small subunit (322 aa).

Residue 50–57 (GPAGTGKT) coordinates ATP.

This sequence belongs to the activator 1 small subunits family. RfcS subfamily. In terms of assembly, heteromultimer composed of small subunits (RfcS) and large subunits (RfcL).

Its function is as follows. Part of the RFC clamp loader complex which loads the PCNA sliding clamp onto DNA. The sequence is that of Replication factor C small subunit from Halobacterium salinarum (strain ATCC 700922 / JCM 11081 / NRC-1) (Halobacterium halobium).